The sequence spans 749 residues: Amyloid-beta A4 precursor protein-binding family A member 2 (749 aa).

Disordered regions lie at residues 1-94 (MAHQ…PEEE) and 130-343 (DTDE…NNIP). Serine 11 bears the Phosphoserine mark. Residues 70–80 (GDSSSDYVNNT) are compositionally biased toward polar residues. 2 stretches are compositionally biased toward acidic residues: residues 81-94 (SEEE…PEEE) and 131-142 (TDECQEAVEEWT). The segment at 185–270 (HYCASKEGYQ…SAEACPPIKA (86 aa)) is STXBP1-binding. Serine 208 carries the phosphoserine modification. A compositionally biased stretch (acidic residues) spans 218–227 (DLEDQEEDID). A compositionally biased stretch (polar residues) spans 237–247 (LSMTSITSASE). Basic and acidic residues predominate over residues 305-315 (RTPEERPKWPH). The region spanning 366–555 (LIDGIIFAAN…IINTQEMYND (190 aa)) is the PID domain. PDZ domains follow at residues 568-653 (ELQL…NIVS) and 659-735 (TVLI…MPAA).

In terms of assembly, part of a multimeric complex containing STXBP1 and syntaxin-1. Binds to the cytoplasmic domain of amyloid-beta protein, and to the nuclear factor NF-kappa-B/p65 via its PDZ domain. Interacts with the N-terminal domain of NECAB3.

Its function is as follows. Putative function in synaptic vesicle exocytosis by binding to STXBP1, an essential component of the synaptic vesicle exocytotic machinery. May modulate processing of the amyloid-beta precursor protein (APP) and hence formation of APP-beta. The chain is Amyloid-beta A4 precursor protein-binding family A member 2 (APBA2) from Pongo abelii (Sumatran orangutan).